A 156-amino-acid chain; its full sequence is Isotocin-neurophysin IT 2 (156 aa).

The N-terminal stretch at 1 to 19 (MTGAAVSVCLLYALSVCSA) is a signal peptide. Cys20 and Cys25 are disulfide-bonded. At Gly28 the chain carries Glycine amide. Cystine bridges form between Cys41–Cys85, Cys44–Cys58, Cys52–Cys75, Cys59–Cys65, Cys92–Cys105, Cys99–Cys117, and Cys106–Cys111.

It belongs to the vasopressin/oxytocin family. Post-translationally, seven disulfide bonds are present in neurophysin.

The protein resides in the secreted. Its function is as follows. Isotocin causes contraction of smooth muscles. The polypeptide is Isotocin-neurophysin IT 2 (Oncorhynchus keta (Chum salmon)).